The chain runs to 125 residues: MIKKTSGTEIRALARHIGMSAQKARRVIDQIRGCSYEQTLMILELMPYRACYPIFKLVYSAAANASHNRGLKEADLFISKAEVNEGVIVKRLKPRARGRSYPIKRPTCHITIVLSERPNFNFKNI.

It belongs to the universal ribosomal protein uL22 family. Part of the 50S ribosomal subunit.

The protein resides in the plastid. It localises to the chloroplast. Its function is as follows. This protein binds specifically to 23S rRNA. Functionally, the globular domain of the protein is located near the polypeptide exit tunnel on the outside of the subunit, while an extended beta-hairpin is found that lines the wall of the exit tunnel in the center of the 70S ribosome. This Nymphaea alba (White water-lily) protein is Large ribosomal subunit protein uL22c (rpl22).